We begin with the raw amino-acid sequence, 53 residues long: Small polypeptide DEVIL 16 (53 aa).

Asn-6 is a glycosylation site (N-linked (GlcNAc...) asparagine). Positions 14–45 are required for DVL/RTFL small polypeptide activity; that stretch reads TFGQKCSHVVKKQRAKFYILRRCIAMLVCWHD. Residues 30–46 form a helical membrane-spanning segment; it reads FYILRRCIAMLVCWHDQ.

Belongs to the DVL/RTFL small polypeptides family. Mostly expressed in stems, flower buds, flowers and seedling shoots, to a lesser extent, in roots and young cauline leaves, but not in mature rosette leaves. Barely observed in cotyledons and leaf primordia.

It localises to the cell membrane. Its function is as follows. Small polypeptide acting as a regulatory molecule which coordinates cellular responses required for differentiation, growth and development, probably by restricting polar cell proliferation in lateral organs (e.g. leaves) and coordinating socket cell recruitment and differentiation at trichome sites. Regulates the positional cue and cell proliferation along the body axis. The sequence is that of Small polypeptide DEVIL 16 from Arabidopsis thaliana (Mouse-ear cress).